A 99-amino-acid polypeptide reads, in one-letter code: Mu-hexatoxin-Mg1c (99 aa).

Cystine bridges form between Cys61–Cys75, Cys68–Cys80, and Cys74–Cys94.

This sequence belongs to the neurotoxin 14 (magi-1) family. 09 (magi-1) subfamily. As to expression, expressed by the venom gland.

The protein resides in the secreted. Inhibits voltage-gated sodium channels by binding to site 3. Insecticidal neurotoxin. The sequence is that of Mu-hexatoxin-Mg1c from Macrothele gigas (Japanese funnel web spider).